We begin with the raw amino-acid sequence, 188 residues long: ATP synthase subunit b 1 (188 aa).

Residues 35–55 traverse the membrane as a helical segment; the sequence is VHFGSHLFWLAISFGLFYLFI.

The protein belongs to the ATPase B chain family. F-type ATPases have 2 components, F(1) - the catalytic core - and F(0) - the membrane proton channel. F(1) has five subunits: alpha(3), beta(3), gamma(1), delta(1), epsilon(1). F(0) has three main subunits: a(1), b(2) and c(10-14). The alpha and beta chains form an alternating ring which encloses part of the gamma chain. F(1) is attached to F(0) by a central stalk formed by the gamma and epsilon chains, while a peripheral stalk is formed by the delta and b chains.

The protein resides in the cell inner membrane. Functionally, f(1)F(0) ATP synthase produces ATP from ADP in the presence of a proton or sodium gradient. F-type ATPases consist of two structural domains, F(1) containing the extramembraneous catalytic core and F(0) containing the membrane proton channel, linked together by a central stalk and a peripheral stalk. During catalysis, ATP synthesis in the catalytic domain of F(1) is coupled via a rotary mechanism of the central stalk subunits to proton translocation. In terms of biological role, component of the F(0) channel, it forms part of the peripheral stalk, linking F(1) to F(0). In Bartonella henselae (strain ATCC 49882 / DSM 28221 / CCUG 30454 / Houston 1) (Rochalimaea henselae), this protein is ATP synthase subunit b 1.